Here is an 875-residue protein sequence, read N- to C-terminus: Neurotrypsin (875 aa).

A signal peptide spans 1 to 20 (MTLARFVLALVLGALPEVVX). A glycan (N-linked (GlcNAc...) asparagine) is linked at Asn-26. Residues 31-88 (HRPRHSPPTGPHYPYYLPTQQRPPRTRPPPPLPRFPRPPRALPAQRPHALQAGHTPRP) are disordered. Residues 56 to 71 (TRPPPPLPRFPRPPRA) show a composition bias toward pro residues. Residues 93–165 (CPAGEPWVSV…GKVDWGYCDC (73 aa)) enclose the Kringle domain. 20 cysteine pairs are disulfide-bonded: Cys-93-Cys-165, Cys-109-Cys-149, Cys-138-Cys-163, Cys-195-Cys-259, Cys-208-Cys-269, Cys-239-Cys-249, Cys-305-Cys-369, Cys-318-Cys-379, Cys-349-Cys-359, Cys-412-Cys-475, Cys-425-Cys-485, Cys-455-Cys-465, Cys-525-Cys-589, Cys-538-Cys-599, Cys-569-Cys-579, Cys-619-Cys-750, Cys-661-Cys-677, Cys-765-Cys-831, Cys-794-Cys-808, and Cys-821-Cys-850. SRCR domains follow at residues 170 to 271 (IRLR…TCSF), 280 to 381 (IRLV…SCTP), 387 to 487 (IRLA…ACYP), and 500 to 601 (VRLM…ICDY). The interval 619-630 (CGLRLLHRRQKR) is zymogen activation region. A Peptidase S1 domain is found at 631–874 (IIGGKNSLRG…FVPWIKSVTK (244 aa)). Residue His-676 is the Charge relay system of the active site. Asn-683 is a glycosylation site (N-linked (GlcNAc...) asparagine). Catalysis depends on Asp-726, which acts as the Charge relay system. Catalysis depends on Ser-825, which acts as the Charge relay system.

This sequence belongs to the peptidase S1 family.

It is found in the secreted. Plays a role in neuronal plasticity and the proteolytic action may subserve structural reorganizations associated with learning and memory operations. The protein is Neurotrypsin (PRSS12) of Nomascus leucogenys (Northern white-cheeked gibbon).